Consider the following 269-residue polypeptide: Phosphonoacetaldehyde hydrolase (269 aa).

Aspartate 10 functions as the Nucleophile in the catalytic mechanism. Mg(2+) is bound by residues aspartate 10 and alanine 12. Lysine 52 functions as the Schiff-base intermediate with substrate in the catalytic mechanism. A Mg(2+)-binding site is contributed by aspartate 186.

Belongs to the HAD-like hydrolase superfamily. PhnX family. Homodimer. Requires Mg(2+) as cofactor.

The catalysed reaction is phosphonoacetaldehyde + H2O = acetaldehyde + phosphate + H(+). Involved in phosphonate degradation. In Salmonella paratyphi A (strain ATCC 9150 / SARB42), this protein is Phosphonoacetaldehyde hydrolase.